The sequence spans 167 residues: RNA pyrophosphohydrolase (167 aa).

One can recognise a Nudix hydrolase domain in the interval 8–159; that stretch reads PYRTCVGVML…KRPVYERVVK (152 aa). The Nudix box signature appears at 47-68; sequence GGVDPGEDTWAAAKRELYEETS.

It belongs to the Nudix hydrolase family. RppH subfamily. Requires a divalent metal cation as cofactor.

In terms of biological role, accelerates the degradation of transcripts by removing pyrophosphate from the 5'-end of triphosphorylated RNA, leading to a more labile monophosphorylated state that can stimulate subsequent ribonuclease cleavage. This is RNA pyrophosphohydrolase from Bradyrhizobium diazoefficiens (strain JCM 10833 / BCRC 13528 / IAM 13628 / NBRC 14792 / USDA 110).